We begin with the raw amino-acid sequence, 1259 residues long: Cingulin (1259 aa).

The tract at residues 9–324 is head; sequence MADQPIPVGQ…EKFPSLQAQP (316 aa). The ZIM motif lies at 41–55; that stretch reads QDSYGVAVRVQGIDG. The span at 69-79 shows a compositional bias: basic and acidic residues; the sequence is SSYDYDRHYSE. Disordered stretches follow at residues 69–151, 169–232, 317–338, 941–969, and 1192–1259; these read SSYD…IDTK, VRGR…RQSL, FPSLQAQPGEDTRSLGSQKKEL, KSRREIGEAQKQAKEKTAEAERHQFNSSR, and REME…TSSC. The segment covering 80 to 100 has biased composition (polar residues); it reads RSSTLDTAYSQSSRESAWSRG. The segment covering 117-127 has biased composition (low complexity); it reads SATSQQSTSAS. Positions 128-145 are enriched in polar residues; sequence NKTNKNGLSTSSFSNQSS. The span at 179–204 shows a compositional bias: basic and acidic residues; it reads ALKDERKRSQSLDGRKNYQDTADSRE. A compositionally biased stretch (polar residues) spans 220–229; the sequence is VSSANRSFAR. The stretch at 325–1218 forms a coiled coil; it reads GEDTRSLGSQ…KTMEKESKRK (894 aa). Over residues 326–338 the composition is skewed to basic and acidic residues; it reads EDTRSLGSQKKEL. Residues 1220–1259 form a tail region; sequence IRPAHNDDDDLSSDGEYGGSYDPSSITSLLTESNLQTSSC. Positions 1241–1259 are enriched in polar residues; the sequence is DPSSITSLLTESNLQTSSC.

Belongs to the cingulin family. Parallel homodimer. Interacts with TJP1/ZO1 and TJP2/ZO2.

Its subcellular location is the cell junction. The protein localises to the tight junction. Functionally, probably plays a role in the formation and regulation of the tight junction (TJ) paracellular permeability barrier, possibly by linking ZO proteins to the actomyosin cytoskeleton. This Xenopus tropicalis (Western clawed frog) protein is Cingulin.